We begin with the raw amino-acid sequence, 230 residues long: SPbeta prophage-derived putative HNH endonuclease YoqL (230 aa).

In terms of domain architecture, HNH spans C136 to D188.

This sequence belongs to the HNH nuclease family.

In Bacillus subtilis (strain 168), this protein is SPbeta prophage-derived putative HNH endonuclease YoqL (yoqL).